The sequence spans 208 residues: Holliday junction branch migration complex subunit RuvA (208 aa).

Residues 1–63 (MIAFVSGPVA…EDSLTLYGFA (63 aa)) form a domain I region. Positions 64–142 (NDDERQVFEL…EPVGAHIGQQ (79 aa)) are domain II. The flexible linker stretch occupies residues 143–147 (GIGTP). The domain III stretch occupies residues 148-208 (VTSGWRDQLQ…AALQTLNRAR (61 aa)).

Belongs to the RuvA family. Homotetramer. Forms an RuvA(8)-RuvB(12)-Holliday junction (HJ) complex. HJ DNA is sandwiched between 2 RuvA tetramers; dsDNA enters through RuvA and exits via RuvB. An RuvB hexamer assembles on each DNA strand where it exits the tetramer. Each RuvB hexamer is contacted by two RuvA subunits (via domain III) on 2 adjacent RuvB subunits; this complex drives branch migration. In the full resolvosome a probable DNA-RuvA(4)-RuvB(12)-RuvC(2) complex forms which resolves the HJ.

The protein localises to the cytoplasm. In terms of biological role, the RuvA-RuvB-RuvC complex processes Holliday junction (HJ) DNA during genetic recombination and DNA repair, while the RuvA-RuvB complex plays an important role in the rescue of blocked DNA replication forks via replication fork reversal (RFR). RuvA specifically binds to HJ cruciform DNA, conferring on it an open structure. The RuvB hexamer acts as an ATP-dependent pump, pulling dsDNA into and through the RuvAB complex. HJ branch migration allows RuvC to scan DNA until it finds its consensus sequence, where it cleaves and resolves the cruciform DNA. This Streptomyces griseus subsp. griseus (strain JCM 4626 / CBS 651.72 / NBRC 13350 / KCC S-0626 / ISP 5235) protein is Holliday junction branch migration complex subunit RuvA.